The sequence spans 77 residues: Large ribosomal subunit protein bL28 (77 aa).

A disordered region spans residues 1–20; sequence MSRVCQVTGKGPVTGNNISH.

It belongs to the bacterial ribosomal protein bL28 family.

This Pseudomonas fluorescens (strain Pf0-1) protein is Large ribosomal subunit protein bL28.